A 434-amino-acid chain; its full sequence is Glutamate/glutamine/aspartate/asparagine transport system permease protein BztC (434 aa).

10 helical membrane-spanning segments follow: residues 41 to 61, 113 to 133, 135 to 155, 156 to 176, 180 to 200, 227 to 247, 272 to 292, 298 to 318, 360 to 380, and 398 to 418; these read LTVF…PWLL, LFVT…DALP, KLIW…WGGP, IWGP…FTAL, LGVP…WLYA, FLLA…LGIL, GVPL…FLPP, LILR…AEVI, IVSS…VGLF, and GTYW…NFSM. Positions 227 to 422 constitute an ABC transmembrane type-1 domain; it reads FLLALVIGVT…LFNFSMSRYS (196 aa).

This sequence belongs to the binding-protein-dependent transport system permease family. HisMQ subfamily. As to quaternary structure, bztB and BztC form a heterodimer which can form a membrane complex with a homodimer of BztD.

Its subcellular location is the cell inner membrane. Part of a binding-protein-dependent transport system for glutamate, glutamine, aspartate and asparagine. Probably responsible for the translocation of the substrate across the membrane. The protein is Glutamate/glutamine/aspartate/asparagine transport system permease protein BztC (bztC) of Rhodobacter capsulatus (strain ATCC BAA-309 / NBRC 16581 / SB1003).